The following is a 342-amino-acid chain: Phosphate acyltransferase (342 aa).

This sequence belongs to the PlsX family. Homodimer. Probably interacts with PlsY.

It localises to the cytoplasm. It catalyses the reaction a fatty acyl-[ACP] + phosphate = an acyl phosphate + holo-[ACP]. Its pathway is lipid metabolism; phospholipid metabolism. Its function is as follows. Catalyzes the reversible formation of acyl-phosphate (acyl-PO(4)) from acyl-[acyl-carrier-protein] (acyl-ACP). This enzyme utilizes acyl-ACP as fatty acyl donor, but not acyl-CoA. This chain is Phosphate acyltransferase, found in Shewanella woodyi (strain ATCC 51908 / MS32).